A 147-amino-acid polypeptide reads, in one-letter code: MGVRLVVHYRLPASSMDYVQETGRAGRDGKYAIAALFYEKYDSTWSSYVEDSMKNFLNDNTMCVRSFLASEMDGECVCYSLLGEESTVSTMYGVKPTLPETPKPAIATHSRYNASFSSSPPPQPGSSSGMSAMNTNTTSTTPVSGKT.

A Helicase C-terminal domain is found at 1-72; sequence MGVRLVVHYR…CVRSFLASEM (72 aa). The disordered stretch occupies residues 100–147; that stretch reads ETPKPAIATHSRYNASFSSSPPPQPGSSSGMSAMNTNTTSTTPVSGKT. Positions 125-141 are enriched in low complexity; sequence GSSSGMSAMNTNTTSTT.

It belongs to the helicase family. RecQ subfamily.

Truncated ATP-dependent 3'-5' DNA helicase. The protein is Truncated RecQ DNA helicase-like protein C212.06c of Schizosaccharomyces pombe (strain 972 / ATCC 24843) (Fission yeast).